Consider the following 478-residue polypeptide: Phosphoglycerate kinase 2, chloroplastic (478 aa).

The transit peptide at 1 to 74 directs the protein to the chloroplast; sequence MASTAATAAL…GKGARGVITM (74 aa). Ser-78 carries the post-translational modification Phosphoserine. Residues Ala-96, Asp-97, Asn-99, Arg-113, Thr-135, His-136, Gly-138, Arg-139, Arg-194, His-226, and Arg-227 each coordinate (2R)-3-phosphoglycerate. ADP is bound at residue Gly-272. Gly-272 contacts CDP. The AMP site is built by Lys-274 and Lys-278. Lys-278 provides a ligand contact to ATP. Position 296 (Gly-296) interacts with ADP. CDP is bound at residue Gly-296. The AMP site is built by Gly-297 and Gly-369. ATP contacts are provided by Gly-297 and Gly-369. CDP contacts are provided by Gly-394 and Phe-399. Position 399 (Phe-399) interacts with ADP. Glu-400 contributes to the AMP binding site. ATP is bound by residues Glu-400, Asp-431, and Ser-432. Asp-431 contacts Mg(2+).

This sequence belongs to the phosphoglycerate kinase family. As to quaternary structure, monomer. It depends on Mg(2+) as a cofactor.

The protein resides in the plastid. It is found in the chloroplast. The catalysed reaction is (2R)-3-phosphoglycerate + ATP = (2R)-3-phospho-glyceroyl phosphate + ADP. It functions in the pathway carbohydrate biosynthesis; Calvin cycle. In Arabidopsis thaliana (Mouse-ear cress), this protein is Phosphoglycerate kinase 2, chloroplastic.